A 412-amino-acid polypeptide reads, in one-letter code: Sulfhydrogenase 2 subunit alpha (412 aa).

Positions 60, 63, 402, and 405 each coordinate Ni(2+). Residue Cys-63 participates in Fe cation binding. Cys-405 contacts Fe cation.

The protein belongs to the [NiFe]/[NiFeSe] hydrogenase large subunit family. In terms of assembly, dimer of heterotetramer of alpha, beta, gamma and delta subunits. The nickel-containing alpha and delta subunits constitute the hydrogenase activity. The beta and gamma subunits (flavin-containing dimer) constitute the sulfur reductase activity. Ni(2+) is required as a cofactor. Fe cation serves as cofactor.

It is found in the cytoplasm. It catalyses the reaction H2 + NADP(+) = NADPH + H(+). The catalysed reaction is H2 + NAD(+) = NADH + H(+). In terms of biological role, part of a bifunctional enzyme complex that functions as a hydrogen-evolving hydrogenase with sulfur-reducing activity. May play a role in hydrogen cycling during fermentative growth. Activity exhibited with NAD in addition to NADPH. The alpha and delta subunits form the hydrogenase component that catalyzes the reduction of protons to evolve hydrogen. This Pyrococcus furiosus (strain ATCC 43587 / DSM 3638 / JCM 8422 / Vc1) protein is Sulfhydrogenase 2 subunit alpha.